Reading from the N-terminus, the 1185-residue chain is 1-phosphatidylinositol 4,5-bisphosphate phosphodiesterase beta-2 (1185 aa).

Positions 312-463 (HDMTQPLNHY…LRGKILIKNK (152 aa)) constitute a PI-PLC X-box domain. His-327 is a catalytic residue. Ca(2+) contacts are provided by Asn-328, Glu-357, and Asp-359. Residue His-374 is part of the active site. Glu-408 lines the Ca(2+) pocket. Residues 460–533 (IKNKKNQFSG…EEIKKMQSDE (74 aa)) form a disordered region. The span at 465–476 (NQFSGPTSSSKD) shows a compositional bias: polar residues. A compositionally biased stretch (acidic residues) spans 501 to 524 (EGTELEEEEVEEEEEEESGNLDEE). The PI-PLC Y-box domain occupies 546 to 662 (MSSLVNYIQP…GYLLKHEFMR (117 aa)). The C2 domain maps to 662–790 (RRPDKQFNPF…CLHSESNMPL (129 aa)). 2 disordered regions span residues 859-888 (LAPT…RTAS) and 943-979 (GACK…VDGR). The segment covering 872–888 (GAREEAMKEAAEPRTAS) has biased composition (basic and acidic residues). Ser-953 bears the Phosphoserine mark. Residues 988–1147 (ELELLRQGEE…VKESVRACLR (160 aa)) are a coiled coil.

As to quaternary structure, interacts with RAC1. Forms a complex composed of at least WDR26, a G-beta:gamma unit, and PLCB2. It depends on Ca(2+) as a cofactor.

The enzyme catalyses a 1,2-diacyl-sn-glycero-3-phospho-(1D-myo-inositol-4,5-bisphosphate) + H2O = 1D-myo-inositol 1,4,5-trisphosphate + a 1,2-diacyl-sn-glycerol + H(+). It carries out the reaction a 1,2-diacyl-sn-glycero-3-phospho-(1D-myo-inositol) + H2O = 1D-myo-inositol 1-phosphate + a 1,2-diacyl-sn-glycerol + H(+). In terms of biological role, the production of the second messenger molecules diacylglycerol (DAG) and inositol 1,4,5-trisphosphate (IP3) is mediated by activated phosphatidylinositol-specific phospholipase C enzymes. In neutrophils, participates in a phospholipase C-activating N-formyl peptide-activated GPCR (G protein-coupled receptor) signaling pathway by promoting RASGRP4 activation by DAG, to promote neutrophil functional responses. This Homo sapiens (Human) protein is 1-phosphatidylinositol 4,5-bisphosphate phosphodiesterase beta-2.